Here is a 530-residue protein sequence, read N- to C-terminus: NADH-quinone oxidoreductase subunit C/D (530 aa).

The tract at residues 1 to 144 is NADH dehydrogenase I subunit C; that stretch reads MQEIQFIVPA…NPLCMANEET (144 aa). An NADH dehydrogenase I subunit D region spans residues 171-530; that stretch reads EYVVNIGPQH…LDYVVPDIDR (360 aa).

The protein in the N-terminal section; belongs to the complex I 30 kDa subunit family. In the C-terminal section; belongs to the complex I 49 kDa subunit family. NDH-1 is composed of 13 different subunits. Subunits NuoB, CD, E, F, and G constitute the peripheral sector of the complex.

The protein resides in the cell inner membrane. The catalysed reaction is a quinone + NADH + 5 H(+)(in) = a quinol + NAD(+) + 4 H(+)(out). NDH-1 shuttles electrons from NADH, via FMN and iron-sulfur (Fe-S) centers, to quinones in the respiratory chain. The immediate electron acceptor for the enzyme in this species is believed to be a menaquinone. Couples the redox reaction to proton translocation (for every two electrons transferred, four hydrogen ions are translocated across the cytoplasmic membrane), and thus conserves the redox energy in a proton gradient. The polypeptide is NADH-quinone oxidoreductase subunit C/D (Bacteroides thetaiotaomicron (strain ATCC 29148 / DSM 2079 / JCM 5827 / CCUG 10774 / NCTC 10582 / VPI-5482 / E50)).